The following is a 396-amino-acid chain: Tryptophan synthase beta chain (396 aa).

Lys-86 carries the N6-(pyridoxal phosphate)lysine modification.

Belongs to the TrpB family. As to quaternary structure, tetramer of two alpha and two beta chains. The cofactor is pyridoxal 5'-phosphate.

The enzyme catalyses (1S,2R)-1-C-(indol-3-yl)glycerol 3-phosphate + L-serine = D-glyceraldehyde 3-phosphate + L-tryptophan + H2O. It participates in amino-acid biosynthesis; L-tryptophan biosynthesis; L-tryptophan from chorismate: step 5/5. Its function is as follows. The beta subunit is responsible for the synthesis of L-tryptophan from indole and L-serine. In Vibrio vulnificus (strain CMCP6), this protein is Tryptophan synthase beta chain.